We begin with the raw amino-acid sequence, 203 residues long: NADH dehydrogenase [ubiquinone] 1 alpha subcomplex assembly factor 4 (203 aa).

This sequence belongs to the NDUFAF4 family. In terms of assembly, together with NdufAF3 associates with mitochondrial complex I assembly intermediates during its biogenesis.

Involved in the assembly of mitochondrial NADH:ubiquinone oxidoreductase complex (complex I). Together with NdufAF3, involved in biogenesis of complex 1 modules N, Q and P-peripheral, but not the P-distal module. Required for recruitment of the complex I assembly factor Timmdc1 to complex 1 assembly intermediates. This is NADH dehydrogenase [ubiquinone] 1 alpha subcomplex assembly factor 4 from Drosophila melanogaster (Fruit fly).